The chain runs to 368 residues: Peptide chain release factor 2 (368 aa).

Gln-251 carries the post-translational modification N5-methylglutamine.

The protein belongs to the prokaryotic/mitochondrial release factor family. Post-translationally, methylated by PrmC. Methylation increases the termination efficiency of RF2.

The protein localises to the cytoplasm. In terms of biological role, peptide chain release factor 2 directs the termination of translation in response to the peptide chain termination codons UGA and UAA. This Streptomyces avermitilis (strain ATCC 31267 / DSM 46492 / JCM 5070 / NBRC 14893 / NCIMB 12804 / NRRL 8165 / MA-4680) protein is Peptide chain release factor 2.